Consider the following 432-residue polypeptide: Adenylosuccinate synthetase (432 aa).

Residues 12–18 (GDEGKGK) and 40–42 (GHT) each bind GTP. The active-site Proton acceptor is D13. D13 and G40 together coordinate Mg(2+). IMP contacts are provided by residues 13 to 16 (DEGK), 38 to 41 (NAGH), T132, R146, Q226, T241, and R305. The active-site Proton donor is H41. Residue 301-307 (VVTGRKR) participates in substrate binding. Residues R307, 333–335 (KLD), and 415–417 (STS) contribute to the GTP site.

The protein belongs to the adenylosuccinate synthetase family. As to quaternary structure, homodimer. The cofactor is Mg(2+).

The protein localises to the cytoplasm. The catalysed reaction is IMP + L-aspartate + GTP = N(6)-(1,2-dicarboxyethyl)-AMP + GDP + phosphate + 2 H(+). It participates in purine metabolism; AMP biosynthesis via de novo pathway; AMP from IMP: step 1/2. Functionally, plays an important role in the de novo pathway of purine nucleotide biosynthesis. Catalyzes the first committed step in the biosynthesis of AMP from IMP. This is Adenylosuccinate synthetase from Rhizobium etli (strain CIAT 652).